A 124-amino-acid polypeptide reads, in one-letter code: Salivary protein 15 Iric-3 (124 aa).

The first 22 residues, 1 to 22 (MESFVAMKVVCIILLFVIAAEA), serve as a signal peptide directing secretion. N82 and N93 each carry an N-linked (GlcNAc...) asparagine glycan. The tract at residues 105 to 124 (GPNNQTCHKKDECVGYIPGC) is CD4-binding.

The protein belongs to the salp15 family. Interacts with host CD4. Interacts with host DC-SIGN (CD209). Interacts with Borrelia outer surface protein C (OspC). In terms of tissue distribution, expressed in salivary glands. Detected in fed adult female.

It localises to the secreted. Salivary tick protein that downregulates host immune system by binding to both dendritic cells, and CD4(+) T cells. Specifically binds to the CD4 coreceptor on T cells. This interaction prevents the activation of the Src kinase, Lck, and its downstream substrate Zap-70, and results in deficient activation of PLCgamma1, the repression of calcium fluxes triggered by T-cell antigen receptor (TCR) ligation, and a subsequent reduction in interleukin-2 production. This salivary protein also binds to DC-SIGN (CD209) on dendritic cells (DC) and activates the Raf-1 kinase/MEK signaling pathway that results in down-regulating expression of pro-inflammatory cytokines. Furthermore, it inhibits T cell proliferation induced by DCs. In addition, it inhibits in vitro keratinocyte inflammation induced by Borrelia burgdorferi or by the major outer surface protein (OspC) of Borrelia. In addition, it downregulates chemokines and monocyte chemoattractant protein 1, as well as several antimicrobial peptides such as defensins, cathelicidin, psoriasin, and RNase 7. Apart from its immunomodulatory activities, it is also associated with protection of Borrelia spirochetes from antibody-mediated killing through its binding to OspC. In vivo, tests on different immune disease animal models show promising therapeutic results, e.g., in inhibiting HIV infection, experimental autoimmune encephalomyelitis, transplantation rejection, and asthma. In Ixodes ricinus (Common tick), this protein is Salivary protein 15 Iric-3.